The sequence spans 414 residues: Procollagen C-endopeptidase enhancer 2 (414 aa).

Residues 1–22 form the signal peptide; it reads MGGASACIPLCLLLATARMARP. Cystine bridges form between Cys-32–Cys-58, Cys-85–Cys-106, Cys-153–Cys-180, Cys-207–Cys-230, Cys-296–Cys-363, Cys-300–Cys-366, and Cys-311–Cys-414. CUB domains follow at residues 32–143 and 153–267; these read CGGI…YSAA and CGGR…YKFR. One can recognise an NTR domain in the interval 296–414; sequence CQQKCRRMGT…PMNALKNKQC (119 aa). N-linked (GlcNAc...) asparagine glycosylation occurs at Asn-354.

In terms of assembly, interacts with heparin with high affinity, and type I or II collagen. In terms of processing, O-glycosylated; contains sialic acid.

Its subcellular location is the secreted. Binds to the C-terminal propeptide of types I and II procollagens and may enhance the cleavage of that propeptide by BMP1. The protein is Procollagen C-endopeptidase enhancer 2 (Pcolce2) of Mus musculus (Mouse).